A 359-amino-acid polypeptide reads, in one-letter code: Peptide chain release factor 1 (359 aa).

N5-methylglutamine is present on glutamine 236.

Belongs to the prokaryotic/mitochondrial release factor family. In terms of processing, methylated by PrmC. Methylation increases the termination efficiency of RF1.

The protein localises to the cytoplasm. Functionally, peptide chain release factor 1 directs the termination of translation in response to the peptide chain termination codons UAG and UAA. The chain is Peptide chain release factor 1 from Streptococcus pneumoniae serotype 2 (strain D39 / NCTC 7466).